We begin with the raw amino-acid sequence, 352 residues long: 4-hydroxy-2-oxovalerate aldolase 4 (352 aa).

A Pyruvate carboxyltransferase domain is found at Ile-9 to Ile-261. Residue Arg-17–Asp-18 coordinates substrate. Asp-18 serves as a coordination point for Mn(2+). His-21 acts as the Proton acceptor in catalysis. Ser-171 and His-200 together coordinate substrate. 2 residues coordinate Mn(2+): His-200 and His-202. Position 291 (Tyr-291) interacts with substrate.

It belongs to the 4-hydroxy-2-oxovalerate aldolase family.

It carries out the reaction (S)-4-hydroxy-2-oxopentanoate = acetaldehyde + pyruvate. The sequence is that of 4-hydroxy-2-oxovalerate aldolase 4 from Rhodococcus jostii (strain RHA1).